Here is a 208-residue protein sequence, read N- to C-terminus: Regulator of G-protein signaling 4 (208 aa).

Residues C2, C12, and C95 are each lipidated (S-palmitoyl cysteine). The region spanning 62-178 (SLENLIHHDR…LKSPYLDLVS (117 aa)) is the RGS domain.

Palmitoylated on Cys-2 and/or Cys-12. In terms of processing, phosphorylated by cyclic GMP-dependent protein kinase. Expressed in the developing nervous system.

In terms of biological role, inhibits signal transduction by increasing the GTPase activity of G protein alpha subunits thereby driving them into their inactive GDP-bound form. Activity on G(z)-alpha is inhibited by phosphorylation of the G-protein. Activity on G(z)-alpha and G(i)-alpha-1 is inhibited by palmitoylation of the G-protein. The sequence is that of Regulator of G-protein signaling 4 (RGS4) from Gallus gallus (Chicken).